The following is a 255-amino-acid chain: Cytosolic Fe-S cluster assembly factor Nubp2 homolog (255 aa).

14–21 lines the ATP pocket; that stretch reads GKGGVGKS. Residues Cys-185 and Cys-188 each contribute to the [4Fe-4S] cluster site.

This sequence belongs to the Mrp/NBP35 ATP-binding proteins family. NUBP2/CFD1 subfamily. As to quaternary structure, heterotetramer of 2 Nubp1 and 2 Nubp2 chains. [4Fe-4S] cluster serves as cofactor.

It is found in the cytoplasm. Component of the cytosolic iron-sulfur (Fe/S) protein assembly (CIA) machinery. Required for maturation of extramitochondrial Fe-S proteins. The Nubp1-Nubp2 heterotetramer forms a Fe-S scaffold complex, mediating the de novo assembly of an Fe-S cluster and its transfer to target apoproteins. In Drosophila persimilis (Fruit fly), this protein is Cytosolic Fe-S cluster assembly factor Nubp2 homolog.